A 279-amino-acid polypeptide reads, in one-letter code: Phenylalanine 3-hydroxylase (279 aa).

Residues histidine 140, histidine 145, and glutamate 186 each contribute to the Fe cation site.

This sequence belongs to the biopterin-dependent aromatic amino acid hydroxylase family. It depends on Fe(2+) as a cofactor.

The enzyme catalyses (6R)-L-erythro-5,6,7,8-tetrahydrobiopterin + L-phenylalanine + O2 = 3-hydroxy-L-phenylalanine + (4aS,6R)-4a-hydroxy-L-erythro-5,6,7,8-tetrahydrobiopterin. Functionally, in vitro, catalyzes the highly regiospecific C-3 hydroxylation of L-phenylalanine (L-Phe) to yield 3-hydroxy-L-phenylalanine (meta-Tyr), an amino acid found in bacterial secondary metabolites such as sanglifehrin A and some pacidamycins. Tetrahydrobiopterin (BH4) seems to be the physiological pterin, however the hydroxylase is also able to use 6-methyltetrahydropterin (6-MePH4). The protein is Phenylalanine 3-hydroxylase of Streptomyces coeruleorubidus.